Consider the following 409-residue polypeptide: Gamma-glutamyl phosphate reductase (409 aa).

Belongs to the gamma-glutamyl phosphate reductase family.

The protein localises to the cytoplasm. It carries out the reaction L-glutamate 5-semialdehyde + phosphate + NADP(+) = L-glutamyl 5-phosphate + NADPH + H(+). It participates in amino-acid biosynthesis; L-proline biosynthesis; L-glutamate 5-semialdehyde from L-glutamate: step 2/2. In terms of biological role, catalyzes the NADPH-dependent reduction of L-glutamate 5-phosphate into L-glutamate 5-semialdehyde and phosphate. The product spontaneously undergoes cyclization to form 1-pyrroline-5-carboxylate. The protein is Gamma-glutamyl phosphate reductase of Koribacter versatilis (strain Ellin345).